The sequence spans 181 residues: Large ribosomal subunit protein uL5 (181 aa).

Belongs to the universal ribosomal protein uL5 family. In terms of assembly, part of the 50S ribosomal subunit; part of the 5S rRNA/L5/L18/L25 subcomplex. Contacts the 5S rRNA and the P site tRNA. Forms a bridge to the 30S subunit in the 70S ribosome.

This is one of the proteins that bind and probably mediate the attachment of the 5S RNA into the large ribosomal subunit, where it forms part of the central protuberance. In the 70S ribosome it contacts protein S13 of the 30S subunit (bridge B1b), connecting the 2 subunits; this bridge is implicated in subunit movement. Contacts the P site tRNA; the 5S rRNA and some of its associated proteins might help stabilize positioning of ribosome-bound tRNAs. The sequence is that of Large ribosomal subunit protein uL5 from Helicobacter pylori (strain J99 / ATCC 700824) (Campylobacter pylori J99).